The sequence spans 476 residues: MNFETVIGLEVHVELKTNSKIFSSAPAHFGAEPNTNTTVVDLGMPGVLPVLNKRAVEYGMKAAMAINCEIAEHTKFDRKNYFYPDNPKAYQISQFDKPIGEHGWIEIEVGGKKKKIGITRLHLEEDAGKNTHTSHGYSLVDINRQGTPLIEIVSEPDIRSAEEAYAYLEKLKSIIQYTGVSDVKMEEGSMRCDANISIRPIGQEAFGVKTELKNLNSFNNVRKGIEYEEKRQAEVLLSGGIIEQETRRFEEATGKTSLMRIKEGSDDYRYFPEPDLVDLFIDDAWKERIRAEIPELPDKRQIRYINDLGLPAYDAMVLTLTKEMSDFFEATLAARADAKQASNWLMGEVSAYLNAEQKELNETGLTPENLAGMIKLIEAGTISSKIAKKVFRELAQNGGDAEQVVKDKGLVQISDEGALRTIIGEILDNNEQSITDYKNGKDRAVGFLVGQVMKATKGQANPPMVNKLLLEEMNKR.

It belongs to the GatB/GatE family. GatB subfamily. As to quaternary structure, heterotrimer of A, B and C subunits.

The catalysed reaction is L-glutamyl-tRNA(Gln) + L-glutamine + ATP + H2O = L-glutaminyl-tRNA(Gln) + L-glutamate + ADP + phosphate + H(+). It catalyses the reaction L-aspartyl-tRNA(Asn) + L-glutamine + ATP + H2O = L-asparaginyl-tRNA(Asn) + L-glutamate + ADP + phosphate + 2 H(+). In terms of biological role, allows the formation of correctly charged Asn-tRNA(Asn) or Gln-tRNA(Gln) through the transamidation of misacylated Asp-tRNA(Asn) or Glu-tRNA(Gln) in organisms which lack either or both of asparaginyl-tRNA or glutaminyl-tRNA synthetases. The reaction takes place in the presence of glutamine and ATP through an activated phospho-Asp-tRNA(Asn) or phospho-Glu-tRNA(Gln). The chain is Aspartyl/glutamyl-tRNA(Asn/Gln) amidotransferase subunit B from Listeria welshimeri serovar 6b (strain ATCC 35897 / DSM 20650 / CCUG 15529 / CIP 8149 / NCTC 11857 / SLCC 5334 / V8).